The chain runs to 656 residues: Vi polysaccharide export protein VexE (656 aa).

Its function is as follows. May be involved in translocation of the Vi antigen. This Salmonella typhi protein is Vi polysaccharide export protein VexE (vexE).